The following is a 462-amino-acid chain: Glycine--tRNA ligase (462 aa).

Residues arginine 98 and glutamate 174 each coordinate substrate. ATP is bound by residues 206–208 (RNE), 216–221 (FRTREF), 290–291 (EL), and 334–337 (GADR). Residue 221-225 (FEQME) participates in substrate binding. 330–334 (EPSLG) is a binding site for substrate.

It belongs to the class-II aminoacyl-tRNA synthetase family. Homodimer.

It is found in the cytoplasm. The catalysed reaction is tRNA(Gly) + glycine + ATP = glycyl-tRNA(Gly) + AMP + diphosphate. Functionally, catalyzes the attachment of glycine to tRNA(Gly). The protein is Glycine--tRNA ligase of Lachnoclostridium phytofermentans (strain ATCC 700394 / DSM 18823 / ISDg) (Clostridium phytofermentans).